The primary structure comprises 151 residues: UPF0208 membrane protein YfbV (151 aa).

Transmembrane regions (helical) follow at residues 46–65 (YAIR…QIAL) and 69–91 (LGPA…WWLG).

This sequence belongs to the UPF0208 family.

The protein localises to the cell inner membrane. This is UPF0208 membrane protein YfbV from Escherichia coli O1:K1 / APEC.